Here is a 584-residue protein sequence, read N- to C-terminus: Vesicular glutamate transporter 2.1 (584 aa).

Over 1 to 70 (METPREPAGF…CTCFGLPRRY (70 aa)) the chain is Cytoplasmic. The chain crosses the membrane as a helical span at residues 71–91 (IIAIMSGLGFCISFGIRCNLG). The Vesicular portion of the chain corresponds to 92 to 124 (VAIVSMVNNSTIHLNGKIIIKEKAKFNWDPETV). N-linked (GlcNAc...) asparagine glycosylation is found at Asn-99 and Asn-100. Residues 125–145 (GLIHGSFFWGYIVTQIPGGYI) form a helical membrane-spanning segment. The Cytoplasmic segment spans residues 146-148 (SSR). Residues 149 to 169 (LAANRVFGAAILLTSTLNMFI) traverse the membrane as a helical segment. At 170–177 (PSAARGHY) the chain is on the vesicular side. The helical transmembrane segment at 178–198 (GCVIFVRILQGLVEGVTYPAC) threads the bilayer. Topologically, residues 199-216 (HGIWSKWAPPLERSRLAT) are cytoplasmic. A helical transmembrane segment spans residues 217 to 237 (TSFCGSYAGAVIAMPLAGILV). Topologically, residues 238–244 (QYTGWSS) are vesicular. The chain crosses the membrane as a helical span at residues 245 to 265 (VFYVYGCFGIFWYMFWILVSY). Residues 266–310 (ESPAEHPTITAEERCYIEESIGESAKLLGPADKFKTPWRKFFTSM) lie on the Cytoplasmic side of the membrane. The helical transmembrane segment at 311–331 (PVYAIIVANFCRSWTFYLLLI) threads the bilayer. At 332-349 (SQPAYFEEVFGFEISKVG) the chain is on the vesicular side. The helical transmembrane segment at 350 to 370 (MLSALPHLVMTIIVPIGGQLA) threads the bilayer. The Cytoplasmic segment spans residues 371-386 (DHLRSKNILSTTTVRK). The helical transmembrane segment at 387–407 (IMNCGGFGMEATLLLIVGYSH) threads the bilayer. The Vesicular segment spans residues 408–409 (SK). The helical transmembrane segment at 410-430 (GVAISFLVLAVGFSGFAISGF) threads the bilayer. Over 431-445 (NVNHLDIAPRYASIL) the chain is Cytoplasmic. Residues 446-466 (MGISNGVGTLSGMVCPLIVGA) traverse the membrane as a helical segment. At 467–477 (MTKHKTREEWQ) the chain is on the vesicular side. The helical transmembrane segment at 478–498 (YVFLIASLVHYGGVIFYGIFA) threads the bilayer. Residues 499–584 (SGEKQPWADP…YGYRQGGNYS (86 aa)) lie on the Cytoplasmic side of the membrane.

The protein belongs to the major facilitator superfamily. Sodium/anion cotransporter family. VGLUT subfamily. As to expression, expressed in spinal cord and retinal ganglion cells.

Its subcellular location is the cytoplasmic vesicle. It is found in the secretory vesicle. It localises to the synaptic vesicle membrane. The protein resides in the membrane. The protein localises to the synapse. Its subcellular location is the synaptosome. It is found in the cell membrane. The catalysed reaction is L-glutamate(out) = L-glutamate(in). The enzyme catalyses 3 Na(+)(out) + phosphate(out) = 3 Na(+)(in) + phosphate(in). It carries out the reaction phosphate(in) = phosphate(out). It catalyses the reaction K(+)(in) + H(+)(out) = K(+)(out) + H(+)(in). The catalysed reaction is chloride(in) = chloride(out). Chloride channel activity is allosterically activated by lumenal H(+) and Cl(-) leading to synaptic vesicles acidification. The L-glutamate transport activity is allosterically activated by lumenal H(+) and Cl(-). The allosteric requirement for H(+) efficiently prevents non-vesicular efflux across the plasma membrane. The L-glutamate uniporter activity exhibits a biphasic dependence on chloride concentration. Its function is as follows. Multifunctional transporter that transports L-glutamate as well as multiple ions such as chloride, proton, potassium, sodium and phosphate. At the synaptic vesicle membrane, mainly functions as a uniporter which transports preferentially L-glutamate but also, phosphate from the cytoplasm into synaptic vesicles at presynaptic nerve terminals of excitatory neural cells. The L-glutamate or phosphate uniporter activity is electrogenic and is driven by the proton electrochemical gradient, mainly by the electrical gradient established by the vacuolar H(+)-ATPase across the synaptic vesicle membrane. In addition, functions as a chloride channel that allows a chloride permeation through the synaptic vesicle membrane therefore affects the proton electrochemical gradient and promotes synaptic vesicles acidification. Moreover, functions as a vesicular K(+)/H(+) antiport allowing to maintain the electrical gradient and to decrease chemical gradient and therefore sustain vesicular L-glutamate uptake. The vesicular H(+)/H(+) antiport activity is electroneutral. At the plasma membrane, following exocytosis, functions as a symporter of Na(+) and phosphate from the extracellular space to the cytoplasm allowing synaptic phosphate homeostasis regulation. The symporter activity is driven by an inside negative membrane potential and is electrogenic. Also involved in the regulation of retinal hyaloid vessel regression during postnatal development. May also play a role in the endocrine L-glutamatergic system of other tissues such as pineal gland and pancreas. Required for glutamate release by retinotectal synapses and visual acuity. The polypeptide is Vesicular glutamate transporter 2.1 (slc17a6b) (Danio rerio (Zebrafish)).